Reading from the N-terminus, the 549-residue chain is ATP synthase subunit alpha (549 aa).

172–179 provides a ligand contact to ATP; it reads GDRKTGKT.

The protein belongs to the ATPase alpha/beta chains family. F-type ATPases have 2 components, CF(1) - the catalytic core - and CF(0) - the membrane proton channel. CF(1) has five subunits: alpha(3), beta(3), gamma(1), delta(1), epsilon(1). CF(0) has three main subunits: a(1), b(2) and c(9-12). The alpha and beta chains form an alternating ring which encloses part of the gamma chain. CF(1) is attached to CF(0) by a central stalk formed by the gamma and epsilon chains, while a peripheral stalk is formed by the delta and b chains.

The protein resides in the cell membrane. The enzyme catalyses ATP + H2O + 4 H(+)(in) = ADP + phosphate + 5 H(+)(out). Its function is as follows. Produces ATP from ADP in the presence of a proton gradient across the membrane. The alpha chain is a regulatory subunit. This is ATP synthase subunit alpha from Mycobacterium tuberculosis (strain CDC 1551 / Oshkosh).